The following is a 486-amino-acid chain: NADH-quinone oxidoreductase subunit N (486 aa).

A run of 13 helical transmembrane segments spans residues 5–25, 41–61, 77–97, 118–138, 165–185, 209–229, 245–265, 275–295, 304–324, 335–355, 380–400, 413–433, and 458–478; these read IGLS…ASLL, LITL…LVVF, GVTQ…MVMM, SAVG…FIGL, YFIL…FIFG, FLFG…IAPF, TAFM…RIIA, LFDI…AAAI, IAYS…TAGV, VIFY…IAAM, ALCL…LGFF, GLLW…YYYL, and VTAV…GPIF.

This sequence belongs to the complex I subunit 2 family. As to quaternary structure, NDH-1 is composed of 14 different subunits. Subunits NuoA, H, J, K, L, M, N constitute the membrane sector of the complex.

Its subcellular location is the cell inner membrane. The enzyme catalyses a quinone + NADH + 5 H(+)(in) = a quinol + NAD(+) + 4 H(+)(out). In terms of biological role, NDH-1 shuttles electrons from NADH, via FMN and iron-sulfur (Fe-S) centers, to quinones in the respiratory chain. The immediate electron acceptor for the enzyme in this species is believed to be ubiquinone. Couples the redox reaction to proton translocation (for every two electrons transferred, four hydrogen ions are translocated across the cytoplasmic membrane), and thus conserves the redox energy in a proton gradient. The polypeptide is NADH-quinone oxidoreductase subunit N (Bdellovibrio bacteriovorus (strain ATCC 15356 / DSM 50701 / NCIMB 9529 / HD100)).